We begin with the raw amino-acid sequence, 355 residues long: F-box only protein 32 (355 aa).

The Nuclear localization signal signature appears at 62–67 (KKRKKD). The Nuclear export signal signature appears at 169–173 (LLQTL). Positions 223-271 (LTITDLPVCLQLNIMQRLSDGRDLVSLGQAAPDLHVLSEDRLLWKRLCQ) constitute an F-box domain. A Bipartite nuclear localization signal motif is present at residues 280–295 (RKRLILSDKGQLDWKK).

Part of the SCF (SKP1-CUL1-F-box) E3 ubiquitin-protein ligase complex SCF(FBXO32) formed of CUL1, SKP1, RBX1 and FBXO32. In terms of tissue distribution, specifically expressed in cardiac and skeletal muscle.

The protein localises to the cytoplasm. It is found in the nucleus. It functions in the pathway protein modification; protein ubiquitination. Functionally, substrate recognition component of a SCF (SKP1-CUL1-F-box protein) E3 ubiquitin-protein ligase complex which mediates the ubiquitination and subsequent proteasomal degradation of target proteins. Probably recognizes and binds to phosphorylated target proteins during skeletal muscle atrophy. Recognizes TERF1. This is F-box only protein 32 (Fbxo32) from Mus musculus (Mouse).